The following is a 55-amino-acid chain: Sec-independent protein translocase protein TatA (55 aa).

Residues 1–21 (MGMSFSHLLIVLLIIFVLFGA) form a helical membrane-spanning segment.

It belongs to the TatA/E family. As to quaternary structure, the Tat system comprises two distinct complexes: a TatABC complex, containing multiple copies of TatA, TatB and TatC subunits, and a separate TatA complex, containing only TatA subunits. Substrates initially bind to the TatABC complex, which probably triggers association of the separate TatA complex to form the active translocon.

It is found in the cell inner membrane. In terms of biological role, part of the twin-arginine translocation (Tat) system that transports large folded proteins containing a characteristic twin-arginine motif in their signal peptide across membranes. TatA could form the protein-conducting channel of the Tat system. This chain is Sec-independent protein translocase protein TatA, found in Rickettsia peacockii (strain Rustic).